Here is a 314-residue protein sequence, read N- to C-terminus: Methionyl-tRNA formyltransferase (314 aa).

110–113 (SLLP) provides a ligand contact to (6S)-5,6,7,8-tetrahydrofolate.

The protein belongs to the Fmt family.

The enzyme catalyses L-methionyl-tRNA(fMet) + (6R)-10-formyltetrahydrofolate = N-formyl-L-methionyl-tRNA(fMet) + (6S)-5,6,7,8-tetrahydrofolate + H(+). Functionally, attaches a formyl group to the free amino group of methionyl-tRNA(fMet). The formyl group appears to play a dual role in the initiator identity of N-formylmethionyl-tRNA by promoting its recognition by IF2 and preventing the misappropriation of this tRNA by the elongation apparatus. The polypeptide is Methionyl-tRNA formyltransferase (Bacillus mycoides (strain KBAB4) (Bacillus weihenstephanensis)).